Here is a 234-residue protein sequence, read N- to C-terminus: Large ribosomal subunit protein uL1 (234 aa).

Belongs to the universal ribosomal protein uL1 family. Part of the 50S ribosomal subunit.

Its function is as follows. Binds directly to 23S rRNA. The L1 stalk is quite mobile in the ribosome, and is involved in E site tRNA release. In terms of biological role, protein L1 is also a translational repressor protein, it controls the translation of the L11 operon by binding to its mRNA. This is Large ribosomal subunit protein uL1 from Cronobacter sakazakii (strain ATCC BAA-894) (Enterobacter sakazakii).